Consider the following 164-residue polypeptide: Ribonuclease H (164 aa).

Residues 9–150 (DMPRVTIYTD…ADTLANAATD (142 aa)) enclose the RNase H type-1 domain. 4 residues coordinate Mg(2+): aspartate 18, glutamate 56, aspartate 78, and aspartate 142.

The protein belongs to the RNase H family. In terms of assembly, monomer. The cofactor is Mg(2+).

It is found in the cytoplasm. It catalyses the reaction Endonucleolytic cleavage to 5'-phosphomonoester.. Its function is as follows. Endonuclease that specifically degrades the RNA of RNA-DNA hybrids. This is Ribonuclease H from Chromohalobacter salexigens (strain ATCC BAA-138 / DSM 3043 / CIP 106854 / NCIMB 13768 / 1H11).